The chain runs to 600 residues: Proline--tRNA ligase (600 aa).

This sequence belongs to the class-II aminoacyl-tRNA synthetase family. ProS type 1 subfamily. In terms of assembly, homodimer.

Its subcellular location is the cytoplasm. It carries out the reaction tRNA(Pro) + L-proline + ATP = L-prolyl-tRNA(Pro) + AMP + diphosphate. Catalyzes the attachment of proline to tRNA(Pro) in a two-step reaction: proline is first activated by ATP to form Pro-AMP and then transferred to the acceptor end of tRNA(Pro). As ProRS can inadvertently accommodate and process non-cognate amino acids such as alanine and cysteine, to avoid such errors it has two additional distinct editing activities against alanine. One activity is designated as 'pretransfer' editing and involves the tRNA(Pro)-independent hydrolysis of activated Ala-AMP. The other activity is designated 'posttransfer' editing and involves deacylation of mischarged Ala-tRNA(Pro). The misacylated Cys-tRNA(Pro) is not edited by ProRS. This Prochlorococcus marinus (strain MIT 9215) protein is Proline--tRNA ligase.